Reading from the N-terminus, the 192-residue chain is Photosystem I assembly protein Ycf4 (192 aa).

A run of 2 helical transmembrane segments spans residues 30 to 52 and 72 to 94; these read YFWA…SSYL and IAIG…AIAW.

Belongs to the Ycf4 family.

The protein localises to the cellular thylakoid membrane. Seems to be required for the assembly of the photosystem I complex. The polypeptide is Photosystem I assembly protein Ycf4 (Thermosynechococcus vestitus (strain NIES-2133 / IAM M-273 / BP-1)).